The following is a 501-amino-acid chain: 2,3-bisphosphoglycerate-independent phosphoglycerate mutase (501 aa).

Mn(2+) contacts are provided by Asp12 and Ser62. Catalysis depends on Ser62, which acts as the Phosphoserine intermediate. Substrate contacts are provided by residues His121, 150–151 (RD), Arg182, Arg188, 253–256 (RSDR), and Lys322. 5 residues coordinate Mn(2+): Asp389, His393, Asp430, His431, and His449.

It belongs to the BPG-independent phosphoglycerate mutase family. As to quaternary structure, monomer. Mn(2+) is required as a cofactor.

It catalyses the reaction (2R)-2-phosphoglycerate = (2R)-3-phosphoglycerate. Its pathway is carbohydrate degradation; glycolysis; pyruvate from D-glyceraldehyde 3-phosphate: step 3/5. Functionally, catalyzes the interconversion of 2-phosphoglycerate and 3-phosphoglycerate. The sequence is that of 2,3-bisphosphoglycerate-independent phosphoglycerate mutase from Ehrlichia ruminantium (strain Gardel).